A 150-amino-acid polypeptide reads, in one-letter code: 3-dehydroquinate dehydratase (150 aa).

Y26 functions as the Proton acceptor in the catalytic mechanism. Substrate-binding residues include N77, H83, and D90. The Proton donor role is filled by H103. Substrate-binding positions include 104–105 (LS) and R114.

The protein belongs to the type-II 3-dehydroquinase family. Homododecamer.

The catalysed reaction is 3-dehydroquinate = 3-dehydroshikimate + H2O. It functions in the pathway metabolic intermediate biosynthesis; chorismate biosynthesis; chorismate from D-erythrose 4-phosphate and phosphoenolpyruvate: step 3/7. Functionally, catalyzes a trans-dehydration via an enolate intermediate. The sequence is that of 3-dehydroquinate dehydratase from Pseudoalteromonas translucida (strain TAC 125).